The chain runs to 478 residues: Membrane-bound lytic murein transglycosylase F (478 aa).

The N-terminal stretch at 1–22 (MTRFLFAIILGFLLTACQQVTV) is a signal peptide. A non-LT domain region spans residues 23–257 (EETEYVPHKL…HLNEKYFGHV (235 aa)). The tract at residues 258–478 (KRFDYIDTRA…PGTLSPDKPK (221 aa)) is LT domain. E302 is an active-site residue. A disordered region spans residues 446–478 (SKQQNSDEEEPSDLASEDGPAPVPGTLSPDKPK). The segment covering 451 to 461 (SDEEEPSDLAS) has biased composition (acidic residues).

In the N-terminal section; belongs to the bacterial solute-binding protein 3 family. It in the C-terminal section; belongs to the transglycosylase Slt family.

The protein resides in the cell outer membrane. It catalyses the reaction Exolytic cleavage of the (1-&gt;4)-beta-glycosidic linkage between N-acetylmuramic acid (MurNAc) and N-acetylglucosamine (GlcNAc) residues in peptidoglycan, from either the reducing or the non-reducing ends of the peptidoglycan chains, with concomitant formation of a 1,6-anhydrobond in the MurNAc residue.. Its function is as follows. Murein-degrading enzyme that degrades murein glycan strands and insoluble, high-molecular weight murein sacculi, with the concomitant formation of a 1,6-anhydromuramoyl product. Lytic transglycosylases (LTs) play an integral role in the metabolism of the peptidoglycan (PG) sacculus. Their lytic action creates space within the PG sacculus to allow for its expansion as well as for the insertion of various structures such as secretion systems and flagella. In Shewanella sp. (strain MR-4), this protein is Membrane-bound lytic murein transglycosylase F.